We begin with the raw amino-acid sequence, 64 residues long: Large ribosomal subunit protein bL33 (64 aa).

It belongs to the bacterial ribosomal protein bL33 family.

The sequence is that of Large ribosomal subunit protein bL33 from Synechococcus sp. (strain JA-3-3Ab) (Cyanobacteria bacterium Yellowstone A-Prime).